Here is a 433-residue protein sequence, read N- to C-terminus: Oxaloacetate decarboxylase beta chain 2 (433 aa).

The next 9 membrane-spanning stretches (helical) occupy residues 13-35, 42-64, 125-147, 160-182, 214-236, 266-288, 308-327, 339-361, and 413-432; these read LMHL…WLAI, LLLL…LALT, LFYK…VGAM, LLLG…TLNY, LAPE…VPLI, ILFP…PLLG, TVQN…SVGA, TLGI…VLMA, and VAGV…YVLA.

Belongs to the GcdB/MmdB/OadB family. In terms of assembly, heterotrimer of an alpha, a beta and a gamma subunit. The cofactor is Na(+).

It is found in the cell membrane. The catalysed reaction is oxaloacetate + 2 Na(+)(in) + H(+) = pyruvate + 2 Na(+)(out) + CO2. Its function is as follows. Catalyzes the decarboxylation of oxaloacetate coupled to Na(+) translocation. The polypeptide is Oxaloacetate decarboxylase beta chain 2 (oadB2) (Salmonella typhimurium (strain LT2 / SGSC1412 / ATCC 700720)).